A 304-amino-acid chain; its full sequence is Cell surface-binding protein OPG105 (304 aa).

The region spanning 1–235 is the Alpha-carbonic anhydrase domain; sequence MSQQLSPINI…NDDTEVYYSG (235 aa). At 1–275 the chain is on the virion surface side; that stretch reads MSQQLSPINI…YQKYIEGNKT (275 aa). A helical membrane pass occupies residues 276–294; sequence FAIIAIVFVYILTAILFLM. Residues 295-304 lie on the Intravirion side of the membrane; it reads SRRYSREKQN.

This sequence belongs to the alpha-carbonic anhydrase family. As to quaternary structure, homodimer; disulfide-linked. In terms of processing, apparently non-glycosylated.

The protein resides in the virion membrane. Its function is as follows. Binds to chondroitin sulfate on the cell surface to provide virion attachment to target cell. This Homo sapiens (Human) protein is Cell surface-binding protein OPG105 (OPG105).